The sequence spans 250 residues: V-type proton ATPase subunit D (250 aa).

Belongs to the V-ATPase D subunit family. V-ATPase is a heteromultimeric enzyme made up of two complexes: the ATP-hydrolytic V1 complex and the proton translocation V0 complex. The V1 complex consists of three catalytic AB heterodimers that form a heterohexamer, three peripheral stalks each consisting of EG heterodimers, one central rotor including subunits D and F, and the regulatory subunits C and H. The proton translocation complex V0 consists of the proton transport subunit a, a ring of proteolipid subunits c9c'', rotary subunit d, subunits e and f, and two accessory subunits ATP6AP1/Ac45 and ATP6AP2/PRR.

Functionally, subunit of the V1 complex of vacuolar(H+)-ATPase (V-ATPase), a multisubunit enzyme composed of a peripheral complex (V1) that hydrolyzes ATP and a membrane integral complex (V0) that translocates protons. V-ATPase is responsible for acidifying and maintaining the pH of intracellular compartments and in some cell types, is targeted to the plasma membrane, where it is responsible for acidifying the extracellular environment. This chain is V-type proton ATPase subunit D (VATPD), found in Suberites domuncula (Sponge).